Consider the following 328-residue polypeptide: Sin3 histone deacetylase corepressor complex component SDS3 (328 aa).

A disordered region spans residues 1-64 (MSAAALLAPA…TDLAKHDEED (64 aa)). Ser-2 bears the N-acetylserine mark. The segment at 2–170 (SAAALLAPAP…IENEKLTMEL (169 aa)) is mediates interaction with USP17L2. Pro residues predominate over residues 10 to 21 (APAPAGAPPAPE). Composition is skewed to acidic residues over residues 23-37 (YPEE…EDDE) and 45-54 (SDEDTEDASE). Phosphoserine is present on residues Ser-32 and Ser-45. Thr-49 bears the Phosphothreonine mark. Phosphoserine is present on Ser-53. Residues 64-171 (DFVEMKEQMY…ENEKLTMELT (108 aa)) adopt a coiled-coil conformation. Residues Lys-69, Lys-178, and Lys-201 each participate in a glycyl lysine isopeptide (Lys-Gly) (interchain with G-Cter in SUMO2) cross-link. Residues 226–252 (LKSPKRPASPSSPEHLPTTPAESPAQR) are disordered. Phosphoserine occurs at positions 228, 234, and 237. Thr-244 bears the Phosphothreonine mark.

The protein belongs to the SDS3 family. As to quaternary structure, homodimer. Component of the SIN3 histone deacetylase (HDAC) corepressor complex. Interacts with SIN3A. Interaction with SIN3B enhances the interaction between SIN3B and HDAC1 to form a complex. Interacts with HCFC1. Component of a mSin3A corepressor complex that contains SIN3A, SAP130, SUDS3/SAP45, ARID4B/SAP180, HDAC1 and HDAC2. Interacts with USP17L2; the interaction is direct. Interacts with FOXK2. Polyubiquitinated. 'Lys-63'-polyubiquitinated SUDS3 positively regulates histone deacetylation. Regulated through deubiquitination by USP17L2/USP17 that cleaves 'Lys-63'-linked ubiquitin chains.

It is found in the nucleus. In terms of biological role, regulatory protein which represses transcription and augments histone deacetylase activity of HDAC1. May have a potential role in tumor suppressor pathways through regulation of apoptosis. May function in the assembly and/or enzymatic activity of the mSin3A corepressor complex or in mediating interactions between the complex and other regulatory complexes. In Bos taurus (Bovine), this protein is Sin3 histone deacetylase corepressor complex component SDS3 (SUDS3).